A 319-amino-acid chain; its full sequence is MATKGGTVKAASGFNAMEDAQTLRKAMKGLGTDEDAIISVLAYRNTAQRQEIRTAYKSTIGRDLIDDLKSELSGNFEQVIVGMMTPTVLYDVQELRRAMKGAGTDEGCLIEILASRTPEEIRRISQTYQQQYGRSLEDDIRSDTSFMFQRVLVSLSAGGRDEGNYLDDALVRQDAQDLYEAGEKKWGTDEVKFLTVLCSRNRNHLLHVFDEYKRISQKDIEQSIKSETSGSFEDALLAIVKCMRNKSAYFAEKLYKSMKGLGTDDNTLIRVMVSRAEIDMLDIRAHFKRLYGKSLYSFIKGDTSGDYRKVLLVLCGGDD.

Residue alanine 2 is modified to N-acetylalanine. The residue at position 7 (threonine 7) is a Phosphothreonine. Serine 12 is modified (phosphoserine). 4 Annexin repeats span residues 14-85 (FNAM…GMMT), 86-157 (PTVL…SLSA), 169-241 (ALVR…AIVK), and 245-316 (NKSA…VLCG). N6-acetyllysine is present on residues lysine 213, lysine 293, and lysine 300.

The protein belongs to the annexin family.

The protein resides in the zymogen granule membrane. Calcium/phospholipid-binding protein which promotes membrane fusion and is involved in exocytosis. The sequence is that of Annexin A4 from Homo sapiens (Human).